The sequence spans 472 residues: Uronate isomerase (472 aa).

Belongs to the metallo-dependent hydrolases superfamily. Uronate isomerase family.

The catalysed reaction is D-glucuronate = D-fructuronate. The enzyme catalyses aldehydo-D-galacturonate = keto-D-tagaturonate. It functions in the pathway carbohydrate metabolism; pentose and glucuronate interconversion. The chain is Uronate isomerase from Oceanobacillus iheyensis (strain DSM 14371 / CIP 107618 / JCM 11309 / KCTC 3954 / HTE831).